The primary structure comprises 486 residues: 23S rRNA (uracil(1939)-C(5))-methyltransferase RlmD (486 aa).

The TRAM domain occupies 10 to 71 (TVKAPEYLPD…SSFEKAVVMA (62 aa)). [4Fe-4S] cluster is bound by residues Cys-84, Cys-94, Cys-97, and Cys-176. 6 residues coordinate S-adenosyl-L-methionine: Gln-285, Phe-314, Asn-319, Glu-335, Asn-370, and Asp-391. Cys-442 serves as the catalytic Nucleophile.

It belongs to the class I-like SAM-binding methyltransferase superfamily. RNA M5U methyltransferase family. RlmD subfamily.

The catalysed reaction is uridine(1939) in 23S rRNA + S-adenosyl-L-methionine = 5-methyluridine(1939) in 23S rRNA + S-adenosyl-L-homocysteine + H(+). Functionally, catalyzes the formation of 5-methyl-uridine at position 1939 (m5U1939) in 23S rRNA. In Polaromonas sp. (strain JS666 / ATCC BAA-500), this protein is 23S rRNA (uracil(1939)-C(5))-methyltransferase RlmD.